The following is a 955-amino-acid chain: UvrABC system protein A (955 aa).

35-42 provides a ligand contact to ATP; the sequence is GLSGSGKS. ABC transporter domains lie at 322-601 and 621-951; these read WGST…EESI and GHDN…RYLK. 654–661 contributes to the ATP binding site; sequence GVSGSGKS. A C4-type zinc finger spans residues 754–780; it reads CEACQGDGLIKIEMHFLPDVYVKCDIC.

It belongs to the ABC transporter superfamily. UvrA family. As to quaternary structure, forms a heterotetramer with UvrB during the search for lesions.

It is found in the cytoplasm. Its function is as follows. The UvrABC repair system catalyzes the recognition and processing of DNA lesions. UvrA is an ATPase and a DNA-binding protein. A damage recognition complex composed of 2 UvrA and 2 UvrB subunits scans DNA for abnormalities. When the presence of a lesion has been verified by UvrB, the UvrA molecules dissociate. The sequence is that of UvrABC system protein A from Rickettsia conorii (strain ATCC VR-613 / Malish 7).